Reading from the N-terminus, the 140-residue chain is 3-hydroxyacyl-[acyl-carrier-protein] dehydratase FabZ (140 aa).

H46 is a catalytic residue.

Belongs to the thioester dehydratase family. FabZ subfamily.

It localises to the cytoplasm. The enzyme catalyses a (3R)-hydroxyacyl-[ACP] = a (2E)-enoyl-[ACP] + H2O. Involved in unsaturated fatty acids biosynthesis. Catalyzes the dehydration of short chain beta-hydroxyacyl-ACPs and long chain saturated and unsaturated beta-hydroxyacyl-ACPs. The chain is 3-hydroxyacyl-[acyl-carrier-protein] dehydratase FabZ from Pseudothermotoga lettingae (strain ATCC BAA-301 / DSM 14385 / NBRC 107922 / TMO) (Thermotoga lettingae).